The following is a 107-amino-acid chain: Heme-degrading monooxygenase (107 aa).

The 93-residue stretch at 2–94 (IIVTNTAKIT…YILDNKITYY (93 aa)) folds into the ABM domain. Asn-6 serves as a coordination point for Fe cation. A heme-binding site is contributed by His-76.

This sequence belongs to the antibiotic biosynthesis monooxygenase family. Heme-degrading monooxygenase IsdG subfamily. As to quaternary structure, homodimer.

Its subcellular location is the cytoplasm. The enzyme catalyses heme b + 3 reduced [NADPH--hemoprotein reductase] + 3 O2 = biliverdin IXalpha + CO + Fe(2+) + 3 oxidized [NADPH--hemoprotein reductase] + 3 H2O + H(+). Functionally, allows bacterial pathogens to use the host heme as an iron source. Catalyzes the oxidative degradation of the heme macrocyclic porphyrin ring to the biliverdin in the presence of a suitable electron donor such as ascorbate or NADPH--cytochrome P450 reductase, with subsequent release of free iron. In Bacillus thuringiensis subsp. konkukian (strain 97-27), this protein is Heme-degrading monooxygenase.